Here is a 792-residue protein sequence, read N- to C-terminus: Lon protease (792 aa).

Residues 16 to 208 (LPILPLRETV…KVTYYLTREL (193 aa)) enclose the Lon N-terminal domain. 360–367 (GPPGVGKT) is a binding site for ATP. Positions 597-778 (KDEVGVATGL…DEVLNLALLE (182 aa)) constitute a Lon proteolytic domain. Active-site residues include serine 684 and lysine 727.

This sequence belongs to the peptidase S16 family. In terms of assembly, homohexamer. Organized in a ring with a central cavity.

It is found in the cytoplasm. It catalyses the reaction Hydrolysis of proteins in presence of ATP.. In terms of biological role, ATP-dependent serine protease that mediates the selective degradation of mutant and abnormal proteins as well as certain short-lived regulatory proteins. Required for cellular homeostasis and for survival from DNA damage and developmental changes induced by stress. Degrades polypeptides processively to yield small peptide fragments that are 5 to 10 amino acids long. Binds to DNA in a double-stranded, site-specific manner. The sequence is that of Lon protease from Dictyoglomus thermophilum (strain ATCC 35947 / DSM 3960 / H-6-12).